The primary structure comprises 532 residues: uncharacterized protein (532 aa).

The next 5 membrane-spanning stretches (helical) occupy residues 11-31 (YLSH…ALII), 51-71 (IEPF…KIFF), 126-146 (LIDI…YTLW), 147-167 (ILYN…IIVF), and 231-253 (YVES…VLLI). Residues 315–531 (ICINKLVYEY…MIIPMNNGII (217 aa)) enclose the ABC transporter domain. 349-356 (GKSGSGKS) is a binding site for ATP.

It localises to the membrane. This is an uncharacterized protein from Acanthamoeba polyphaga mimivirus (APMV).